Reading from the N-terminus, the 63-residue chain is Omega-conotoxin Eu1.6 (63 aa).

An N-terminal signal peptide occupies residues 1-21; that stretch reads MGMRMMFTVFLLVVLATTVVS. A propeptide spanning residues 22–47 is cleaved from the precursor; the sequence is FTSDRAPDGRNAAAKAFGLITPTVRK. Cystine bridges form between C49–C55 and C50–C63. The segment at 51–53 is ser-Xaa-Pro motif, crucial for potent interaction with nAChR; it reads SNP.

Belongs to the conotoxin A superfamily. Expressed by the venom duct.

It localises to the secreted. This amidated peptide potently and teversibly inhibits Cav2.2/CACNA1B. Steady-state inactivation is enhanced at hyperpolarized membrane potentials. Also shows a weak interaction at alpha-3-beta-4/ CHRNA3-CHRNB4 and alpha-7/CHRNA7 nAChRs subtypes. In vivo, exhibits a potent analgesic activity in rat partial sciatic nerve injury and chronic constriction injury models. This Conus eburneus (Ivory cone) protein is Omega-conotoxin Eu1.6.